The sequence spans 360 residues: 3-dehydroquinate synthase (360 aa).

Residues 104–108 (GVIGD), 128–129 (TT), lysine 141, and 168–171 (FLDT) contribute to the NAD(+) site. Zn(2+) contacts are provided by glutamate 183, histidine 243, and histidine 260.

It belongs to the sugar phosphate cyclases superfamily. Dehydroquinate synthase family. Co(2+) serves as cofactor. Zn(2+) is required as a cofactor. The cofactor is NAD(+).

It localises to the cytoplasm. The enzyme catalyses 7-phospho-2-dehydro-3-deoxy-D-arabino-heptonate = 3-dehydroquinate + phosphate. The protein operates within metabolic intermediate biosynthesis; chorismate biosynthesis; chorismate from D-erythrose 4-phosphate and phosphoenolpyruvate: step 2/7. In terms of biological role, catalyzes the conversion of 3-deoxy-D-arabino-heptulosonate 7-phosphate (DAHP) to dehydroquinate (DHQ). The sequence is that of 3-dehydroquinate synthase from Streptococcus equi subsp. equi (strain 4047).